The sequence spans 501 residues: UDP-N-acetylmuramoyl-L-alanyl-D-glutamate--2,6-diaminopimelate ligase (501 aa).

Residues Leu-26, Ser-28, and 43 to 45 (HQC) each bind UDP-N-acetyl-alpha-D-muramoyl-L-alanyl-D-glutamate. Residue 123-129 (GTNGKTT) participates in ATP binding. UDP-N-acetyl-alpha-D-muramoyl-L-alanyl-D-glutamate contacts are provided by residues Asn-164, 165 to 166 (TT), Ser-192, Gln-198, and Arg-200. Position 232 is an N6-carboxylysine (Lys-232). Meso-2,6-diaminopimelate is bound by residues Arg-398, 422-425 (DNPR), Gly-473, and Glu-477. The Meso-diaminopimelate recognition motif motif lies at 422–425 (DNPR).

The protein belongs to the MurCDEF family. MurE subfamily. Mg(2+) is required as a cofactor. Carboxylation is probably crucial for Mg(2+) binding and, consequently, for the gamma-phosphate positioning of ATP.

The protein resides in the cytoplasm. The enzyme catalyses UDP-N-acetyl-alpha-D-muramoyl-L-alanyl-D-glutamate + meso-2,6-diaminopimelate + ATP = UDP-N-acetyl-alpha-D-muramoyl-L-alanyl-gamma-D-glutamyl-meso-2,6-diaminopimelate + ADP + phosphate + H(+). It participates in cell wall biogenesis; peptidoglycan biosynthesis. Catalyzes the addition of meso-diaminopimelic acid to the nucleotide precursor UDP-N-acetylmuramoyl-L-alanyl-D-glutamate (UMAG) in the biosynthesis of bacterial cell-wall peptidoglycan. The sequence is that of UDP-N-acetylmuramoyl-L-alanyl-D-glutamate--2,6-diaminopimelate ligase from Haemophilus ducreyi (strain 35000HP / ATCC 700724).